The chain runs to 197 residues: Holliday junction resolvase RecU (197 aa).

Mg(2+)-binding residues include Thr82, Asp84, Glu97, and Gln116.

Belongs to the RecU family. It depends on Mg(2+) as a cofactor.

Its subcellular location is the cytoplasm. It catalyses the reaction Endonucleolytic cleavage at a junction such as a reciprocal single-stranded crossover between two homologous DNA duplexes (Holliday junction).. Its function is as follows. Endonuclease that resolves Holliday junction intermediates in genetic recombination. Cleaves mobile four-strand junctions by introducing symmetrical nicks in paired strands. Promotes annealing of linear ssDNA with homologous dsDNA. Required for DNA repair, homologous recombination and chromosome segregation. This chain is Holliday junction resolvase RecU, found in Streptococcus mutans serotype c (strain ATCC 700610 / UA159).